The sequence spans 201 residues: Ras-related protein Rab-9A (201 aa).

Alanine 2 is subject to N-acetylalanine. Glycine 17 serves as a coordination point for GDP. Residues glycine 17, valine 18, glycine 19, lysine 20, serine 21, serine 22, threonine 34, histidine 38, and threonine 39 each coordinate GTP. The GDP site is built by glycine 19, lysine 20, serine 21, and serine 22. Mg(2+) is bound at residue serine 21. The Switch 1 signature appears at 31-42 (KFDTQLFHTIGV). Mg(2+)-binding residues include threonine 39 and aspartate 62. The Switch 2 signature appears at 64–78 (AGQERFRSLRTPFYR). Residues glycine 65, asparagine 124, lysine 125, and aspartate 127 each contribute to the GTP site. GDP is bound by residues asparagine 124, lysine 125, aspartate 127, alanine 155, and lysine 156. Lysine 156 contributes to the GTP binding site. Serine 179 is subject to Phosphoserine. Threonine 187 carries the post-translational modification Phosphothreonine. S-geranylgeranyl cysteine attachment occurs at residues cysteine 200 and cysteine 201.

This sequence belongs to the small GTPase superfamily. Rab family. Interacts (preferentially in its GTP-bound form) with GCC2 (via its GRIP domain). Interacts (GTP-bound form) with SGSM1; the GDP-bound form has much lower affinity for SGSM1. Interacts with SGSM2. The GTP-bound form but not the GDP-bound form interacts with HPS4 and the BLOC-3 complex (heterodimer of HPS1 and HPS4) but does not interact with HPS1 alone. Interacts (GTP-bound form) with NDE1; two RAB9A-GTP molecules lie on the opposite sides of the NDE1 homodimer; the interaction leads to RAB9A-dynein motor tethering. Interacts (GTP-bound form) with NDEL1. Requires Mg(2+) as cofactor.

It is found in the cell membrane. The protein localises to the endoplasmic reticulum membrane. It localises to the golgi apparatus membrane. The protein resides in the late endosome. Its subcellular location is the cytoplasmic vesicle. It is found in the phagosome membrane. The protein localises to the phagosome. It localises to the cytoplasmic vesicle membrane. The protein resides in the melanosome. It catalyses the reaction GTP + H2O = GDP + phosphate + H(+). With respect to regulation, regulated by guanine nucleotide exchange factors (GEFs) which promote the exchange of bound GDP for free GTP. Regulated by GTPase activating proteins (GAPs) which increase the GTP hydrolysis activity. Inhibited by GDP dissociation inhibitors (GDIs). Its function is as follows. The small GTPases Rab are key regulators of intracellular membrane trafficking, from the formation of transport vesicles to their fusion with membranes. Rabs cycle between an inactive GDP-bound form and an active GTP-bound form that is able to recruit to membranes different sets of downstream effectors directly responsible for vesicle formation, movement, tethering and fusion. RAB9A is involved in the transport of proteins between the endosomes and the trans-Golgi network (TGN). Specifically uses NDE1/NDEL1 as an effector to interact with the dynein motor complex in order to control retrograde trafficking of RAB9-associated late endosomes to the TGN. Involved in the recruitment of SGSM2 to melanosomes and is required for the proper trafficking of melanogenic enzymes TYR, TYRP1 and DCT/TYRP2 to melanosomes in melanocytes. The sequence is that of Ras-related protein Rab-9A (RAB9A) from Canis lupus familiaris (Dog).